We begin with the raw amino-acid sequence, 329 residues long: Sex comb on midleg-like protein 1 (329 aa).

S138 and S238 each carry phosphoserine. Residues 138-157 (SPTLPVSRRENNSPSNLPRP) are disordered. Positions 258 to 325 (WSVEAVVLFL…YYIDRLKQGK (68 aa)) constitute an SAM domain.

The protein belongs to the SCM family.

It is found in the nucleus. In terms of biological role, putative Polycomb group (PcG) protein. PcG proteins act by forming multiprotein complexes, which are required to maintain the transcriptionally repressive state of homeotic genes throughout development. May be involved in spermatogenesis during sexual maturation. The polypeptide is Sex comb on midleg-like protein 1 (SCML1) (Gorilla gorilla gorilla (Western lowland gorilla)).